A 405-amino-acid polypeptide reads, in one-letter code: Threonine synthase (405 aa).

N6-(pyridoxal phosphate)lysine is present on lysine 106. Residues asparagine 132, glycine 233–asparagine 237, and threonine 371 each bind pyridoxal 5'-phosphate.

This sequence belongs to the threonine synthase family. It depends on pyridoxal 5'-phosphate as a cofactor.

It carries out the reaction O-phospho-L-homoserine + H2O = L-threonine + phosphate. It participates in amino-acid biosynthesis; L-threonine biosynthesis; L-threonine from L-aspartate: step 5/5. Functionally, catalyzes the gamma-elimination of phosphate from L-phosphohomoserine and the beta-addition of water to produce L-threonine. The sequence is that of Threonine synthase (thrC) from Methanocaldococcus jannaschii (strain ATCC 43067 / DSM 2661 / JAL-1 / JCM 10045 / NBRC 100440) (Methanococcus jannaschii).